The primary structure comprises 409 residues: LL-diaminopimelate aminotransferase (409 aa).

Positions 15 and 42 each coordinate substrate. Pyridoxal 5'-phosphate-binding positions include Y72, 108-109 (SK), Y132, N187, Y218, and 246-248 (SFS). Substrate contacts are provided by K109, Y132, and N187. An N6-(pyridoxal phosphate)lysine modification is found at K249. Pyridoxal 5'-phosphate contacts are provided by R257 and N292. N292 and R388 together coordinate substrate.

Belongs to the class-I pyridoxal-phosphate-dependent aminotransferase family. LL-diaminopimelate aminotransferase subfamily. Homodimer. The cofactor is pyridoxal 5'-phosphate.

It catalyses the reaction (2S,6S)-2,6-diaminopimelate + 2-oxoglutarate = (S)-2,3,4,5-tetrahydrodipicolinate + L-glutamate + H2O + H(+). Its pathway is amino-acid biosynthesis; L-lysine biosynthesis via DAP pathway; LL-2,6-diaminopimelate from (S)-tetrahydrodipicolinate (aminotransferase route): step 1/1. Its function is as follows. Involved in the synthesis of meso-diaminopimelate (m-DAP or DL-DAP), required for both lysine and peptidoglycan biosynthesis. Catalyzes the direct conversion of tetrahydrodipicolinate to LL-diaminopimelate. The sequence is that of LL-diaminopimelate aminotransferase from Heliobacterium modesticaldum (strain ATCC 51547 / Ice1).